The sequence spans 39 residues: Potassium channel toxin alpha-KTx 2.1 (39 aa).

Disulfide bonds link C7/C29, C13/C34, and C17/C36. Positions 26 to 34 (GAKCMNGKC) are interaction with Ca(2+)-activated K(+) channels. Position 39 is an asparagine amide (N39).

The protein belongs to the short scorpion toxin superfamily. Potassium channel inhibitor family. Alpha-KTx 02 subfamily. Expressed by the venom gland.

Its subcellular location is the secreted. Blocks voltage-gated potassium channels (mKv1.1/KCNA1 (Kd&gt;25 nM), rKv1.2/KCNA2 (Kd=2 nM), mKv1.3/KCNA3 (Kd=1 nM), hKv1.5/KCNA5 (Kd&gt;25 nM) and mKv3.1/KCNC1 (Kd&gt;25 nM)) and calcium-activated potassium channels (KCa1.1/KCNMA1 and KCa3.1/KCNN4, Kd&gt;25 nM). The polypeptide is Potassium channel toxin alpha-KTx 2.1 (Centruroides noxius (Mexican scorpion)).